The sequence spans 70 residues: Large ribosomal subunit protein bL31 (70 aa).

Zn(2+) contacts are provided by Cys-16, Cys-18, Cys-37, and Cys-40.

This sequence belongs to the bacterial ribosomal protein bL31 family. Type A subfamily. In terms of assembly, part of the 50S ribosomal subunit. The cofactor is Zn(2+).

Functionally, binds the 23S rRNA. The sequence is that of Large ribosomal subunit protein bL31 from Actinobacillus pleuropneumoniae serotype 5b (strain L20).